A 648-amino-acid polypeptide reads, in one-letter code: Sodium/nucleoside cotransporter 1 (648 aa).

Residues 1 to 83 (MADDTPRQRE…LCREHWQLFE (83 aa)) lie on the Cytoplasmic side of the membrane. The chain crosses the membrane as a helical span at residues 84–104 (WISKGLLSTAYIGFLIVACLL). The Extracellular segment spans residues 105-108 (DFPR). A helical membrane pass occupies residues 109–129 (ALALFVITCVVLVFLAYNLLK). Residues 130–147 (RLLGSKLKKCVKFQGHSC) are Cytoplasmic-facing. The chain crosses the membrane as a helical span at residues 148 to 168 (LSLWLKRGLALAAGLGVILWL). Topologically, residues 169–175 (SLDTAQR) are extracellular. A helical transmembrane segment spans residues 176–196 (PEQLVSFAGICVFLVLLFAGS). The Cytoplasmic portion of the chain corresponds to 197 to 201 (KHHRA). The helical transmembrane segment at 202-222 (VSWRAVSWGLGLQFVLGLFVI) threads the bilayer. Residues 223–265 (RTEPGFVAFQWLGDQIRVFLSYTEAGSSFVFGEALVKDVFAFQ) lie on the Extracellular side of the membrane. A helical membrane pass occupies residues 266-286 (VLPIIVFFSCVMSVLYYLGLM). The Cytoplasmic segment spans residues 287–294 (QWVILKIA). A helical membrane pass occupies residues 295-318 (WLMQVTMGTSATETLSVAGNIFVS). At 319–339 (QTEAPLLIRPYLADMTLSEVH) the chain is on the extracellular side. Residues 340 to 360 (VVMTGGYATIAGSLLGAYISF) traverse the membrane as a helical segment. Gly361 is a topological domain (cytoplasmic). Residues 362 to 380 (IDASSLIAASVMAAPCALA) form a helical membrane-spanning segment. The Extracellular portion of the chain corresponds to 381 to 427 (LSKLVYPEVEESKFRSEEGVKLTYGDAQNLVEAASAGAAISVKVVAN). Residues 428–448 (IAANLIAFLAVLAFINAALSW) form a helical membrane-spanning segment. At 449–470 (LGDMVDIQGLSFQLICSYVLRP) the chain is on the cytoplasmic side. A helical transmembrane segment spans residues 471 to 491 (VAFLMGVAWEDCPVVAELLGI). At 492 to 531 (KLFLNEFVAYQELSQYKQRRLAGAEEWLGDKKQWISVRAE) the chain is on the extracellular side. A helical transmembrane segment spans residues 532–552 (ILTTYALCGFANFSSIGIMLG). The Cytoplasmic segment spans residues 553–571 (GLTSMVPQRRSDFSQIVLR). Residues 572–592 (ALITGAFVSLVNACVAGILYV) form a helical membrane-spanning segment. The Extracellular segment spans residues 593 to 648 (PRGVEVDCMSLLNQTVSSSSFEVYLCCRQVFQNTSLEFGQEALHNCCRFYNHTVCT). 3 N-linked (GlcNAc...) asparagine glycosylation sites follow: Asn605, Asn625, and Asn643.

This sequence belongs to the concentrative nucleoside transporter (CNT) (TC 2.A.41) family. N-glycosylated. N-glycosylation is required for localization to the plasma membrane and the transporter activity.

Its subcellular location is the cell membrane. The protein localises to the apical cell membrane. It carries out the reaction uridine(out) + Na(+)(out) = uridine(in) + Na(+)(in). It catalyses the reaction thymidine(out) + Na(+)(out) = thymidine(in) + Na(+)(in). The catalysed reaction is cytidine(out) + Na(+)(out) = cytidine(in) + Na(+)(in). The enzyme catalyses adenosine(out) + Na(+)(out) = adenosine(in) + Na(+)(in). Its activity is regulated as follows. Due to its high apparent affinity but slow transport, adenosine could act as a negative regulator of pyrimidine transport under some conditions. Sodium and pyrimidine nucleoside symporter of the plasma membrane that imports uridine, thymidine and cytidine into cells by coupling their transport to the transmembrane sodium electrochemical gradient. Also transports adenosine, an atypical substrate transported with high apparent affinity, but low maximum velocity. Therefore, exhibits the transport characteristics of the nucleoside transport system cit or N2 subtype (N2/cit). Involved in renal nucleoside (re)absorption. This chain is Sodium/nucleoside cotransporter 1, found in Mus musculus (Mouse).